Here is a 249-residue protein sequence, read N- to C-terminus: Uridylate kinase (249 aa).

Residue 21–24 (KLSG) participates in ATP binding. A UMP-binding site is contributed by Gly-63. The ATP site is built by Gly-64 and Arg-68. UMP contacts are provided by residues Asp-84 and 145-152 (TGNPFVTT). 3 residues coordinate ATP: Thr-172, Tyr-178, and Asp-181.

This sequence belongs to the UMP kinase family. As to quaternary structure, homohexamer.

Its subcellular location is the cytoplasm. It carries out the reaction UMP + ATP = UDP + ADP. Its pathway is pyrimidine metabolism; CTP biosynthesis via de novo pathway; UDP from UMP (UMPK route): step 1/1. With respect to regulation, inhibited by UTP. In terms of biological role, catalyzes the reversible phosphorylation of UMP to UDP. The polypeptide is Uridylate kinase (Francisella tularensis subsp. holarctica (strain FTNF002-00 / FTA)).